A 288-amino-acid polypeptide reads, in one-letter code: ATP synthase gamma chain (288 aa).

Belongs to the ATPase gamma chain family. In terms of assembly, F-type ATPases have 2 components, CF(1) - the catalytic core - and CF(0) - the membrane proton channel. CF(1) has five subunits: alpha(3), beta(3), gamma(1), delta(1), epsilon(1). CF(0) has three main subunits: a, b and c.

The protein localises to the cell inner membrane. In terms of biological role, produces ATP from ADP in the presence of a proton gradient across the membrane. The gamma chain is believed to be important in regulating ATPase activity and the flow of protons through the CF(0) complex. This chain is ATP synthase gamma chain, found in Vesicomyosocius okutanii subsp. Calyptogena okutanii (strain HA).